The chain runs to 630 residues: A-type voltage-gated potassium channel KCND2 (630 aa).

Over 1–184 (MAAGVAAWLP…FENPHTSTMA (184 aa)) the chain is Cytoplasmic. Residues 2–20 (AAGVAAWLPFARAAAIGWM) are interaction with KCNIP1, KCNIP2, and other family members. Thr38 carries the phosphothreonine modification. The segment at 71-90 (ERDFFYHPETQQYFFDRDPD) is interaction with KCNIP1. The Zn(2+) site is built by His105, Cys111, Cys132, and Cys133. The chain crosses the membrane as a helical span at residues 185-206 (LVFYYVTGFFIAVSVIANVVET). Residues 207-226 (VPCGSSPGHIKELPCGERYA) lie on the Extracellular side of the membrane. A helical transmembrane segment spans residues 227-249 (VAFFCLDTACVMIFTVEYLLRLA). Topologically, residues 250 to 256 (AAPSRYR) are cytoplasmic. Residues 257 to 281 (FVRSVMSIIDVVAILPYYIGLVMTD) traverse the membrane as a helical segment. The Extracellular segment spans residues 282–287 (NEDVSG). The chain crosses the membrane as a helical; Voltage-sensor span at residues 288 to 307 (AFVTLRVFRVFRIFKFSRHS). Residues 308-321 (QGLRILGYTLKSCA) are Cytoplasmic-facing. Positions 308–321 (QGLRILGYTLKSCA) are S4-S5 linker. A helical transmembrane segment spans residues 322–345 (SELGFLLFSLTMAIIIFATVMFYA). Residues 346-357 (EKGSSASKFTSI) are Extracellular-facing. Residues 358–369 (PAAFWYTIVTMT) constitute an intramembrane region (helical). The K(+) site is built by Thr370, Leu371, Gly372, and Tyr373. Positions 370–375 (TLGYGD) match the Selectivity filter motif. The stretch at 370-377 (TLGYGDMV) is an intramembrane region. The Extracellular segment spans residues 378-380 (PKT). The chain crosses the membrane as a helical span at residues 381-403 (IAGKIFGSICSLSGVLVIALPVP). Residues 404 to 630 (VIVSNFSRIY…GGNIVRVSAL (227 aa)) lie on the Cytoplasmic side of the membrane. The interval 474 to 489 (FETQHHHLLHCLEKTT) is required for dendritic targeting. The interval 474-630 (FETQHHHLLH…GGNIVRVSAL (157 aa)) is important for normal channel activation and inactivation, for interaction with KCNIP2, and probably other family members as well. 4 positions are modified to phosphoserine: Ser548, Ser552, Ser572, and Ser575. Residues 600–622 (IPTPPVTTPEGDDRPESPEYSGG) are disordered. Thr602 and Thr607 each carry phosphothreonine. Ser616 is subject to Phosphoserine. The short motif at 627–630 (VSAL) is the PDZ-binding element.

Belongs to the potassium channel family. D (Shal) (TC 1.A.1.2) subfamily. Kv4.2/KCND2 sub-subfamily. Homotetramer or heterotetramer with KCND1 or KCND3. Associates with the regulatory subunits KCNIP2, KCNIP3 and KCNIP4. Interacts with the regulatory subunit KCNIP1; this interaction mediates the capture of both the N- and C-terminus of KCND2, preventing N-type inactivation and stabilizing the S6 conformation, thereby accelerating closed state inactivation and recovery. In vivo, probably exists as heteromeric complex containing variable proportions of KCND1, KCND2, KCND3, KCNIP1, KCNIP2, KCNIP3, KCNIP4, DPP6 and DPP10. The tetrameric channel can associate with up to four regulatory subunits, such as KCNIP2 or KCNIP4. Interaction with four KCNIP4 chains does not reduce interaction with DPP10. Interacts with DLG4 and NCS1/FREQ. Interacts with DLG1. Probably part of a complex consisting of KCNIP1, KCNIP2 isoform 3 and KCND2. Interacts with FLNA, FLNC and DPP10. Identified in a complex with cAMP-dependent protein kinase (PKA), CAV3, AKAP6 and KCND3 in cardiac myocytes. Interacts (via S1 and S2 helices) with DPP6; this interaction stabilizes the conformation of the S1-S2 helices and facilitates S4 conformational change, including S4 sliding up and down, thereby accelerating activation, inactivation, and recovery. In terms of processing, phosphorylation in response to MAPK activation is increased in stimulated dendrites. Interaction with KCNIP2 and DPP6 propomtes phosphorylation by PKA at Ser-552. Phosphorylation at Ser-552 has no effect on interaction with KCNIP3, but is required for the regulation of channel activity by KCNIP3. Phosphorylation at Ser-552 leads to KCND2 internalization. Phosphorylated by MAPK in response to signaling via the metabotropic glutamate receptor GRM5. Phosphorylation at Ser-616 is required for the down-regulation of neuronal A-type currents in response to signaling via GRM5.

The protein localises to the cell membrane. Its subcellular location is the cell projection. It is found in the dendrite. The protein resides in the synapse. It localises to the perikaryon. The protein localises to the postsynaptic cell membrane. Its subcellular location is the dendritic spine. It is found in the sarcolemma. The protein resides in the cell junction. It localises to the membrane. The protein localises to the caveola. It catalyses the reaction K(+)(in) = K(+)(out). Voltage-gated potassium channel that mediates transmembrane potassium transport in excitable membranes, primarily in the brain, but also in rodent heart. Mediates the major part of the dendritic A-type current I(SA) in brain neurons. This current is activated at membrane potentials that are below the threshold for action potentials. It regulates neuronal excitability, prolongs the latency before the first spike in a series of action potentials, regulates the frequency of repetitive action potential firing, shortens the duration of action potentials and regulates the back-propagation of action potentials from the neuronal cell body to the dendrites. Contributes to the regulation of the circadian rhythm of action potential firing in suprachiasmatic nucleus neurons, which regulates the circadian rhythm of locomotor activity. Functions downstream of the metabotropic glutamate receptor GRM5 and plays a role in neuronal excitability and in nociception mediated by activation of GRM5. Mediates the transient outward current I(to) in rodent heart left ventricle apex cells, but not in human heart, where this current is mediated by another family member. Forms tetrameric potassium-selective channels through which potassium ions pass in accordance with their electrochemical gradient. The channel alternates between opened and closed conformations in response to the voltage difference across the membrane. Can form functional homotetrameric channels and heterotetrameric channels that contain variable proportions of KCND2 and KCND3; channel properties depend on the type of pore-forming alpha subunits that are part of the channel. In vivo, membranes probably contain a mixture of heteromeric potassium channel complexes. Interaction with specific isoforms of the regulatory subunits KCNIP1, KCNIP2, KCNIP3 or KCNIP4 strongly increases expression at the cell surface and thereby increases channel activity; it modulates the kinetics of channel activation and inactivation, shifts the threshold for channel activation to more negative voltage values, shifts the threshold for inactivation to less negative voltages and accelerates recovery after inactivation. Likewise, interaction with DPP6 or DPP10 promotes expression at the cell membrane and regulates both channel characteristics and activity. Upon depolarization, the channel goes from a resting closed state (C state) to an activated but non-conducting state (C* state), from there, the channel may either inactivate (I state) or open (O state). This chain is A-type voltage-gated potassium channel KCND2, found in Mustela putorius furo (European domestic ferret).